A 158-amino-acid polypeptide reads, in one-letter code: NAD(P)H-quinone oxidoreductase subunit J, chloroplastic (158 aa).

This sequence belongs to the complex I 30 kDa subunit family. NDH is composed of at least 16 different subunits, 5 of which are encoded in the nucleus.

It is found in the plastid. It localises to the chloroplast thylakoid membrane. It carries out the reaction a plastoquinone + NADH + (n+1) H(+)(in) = a plastoquinol + NAD(+) + n H(+)(out). The enzyme catalyses a plastoquinone + NADPH + (n+1) H(+)(in) = a plastoquinol + NADP(+) + n H(+)(out). NDH shuttles electrons from NAD(P)H:plastoquinone, via FMN and iron-sulfur (Fe-S) centers, to quinones in the photosynthetic chain and possibly in a chloroplast respiratory chain. The immediate electron acceptor for the enzyme in this species is believed to be plastoquinone. Couples the redox reaction to proton translocation, and thus conserves the redox energy in a proton gradient. In Trachelium caeruleum (Blue throatwort), this protein is NAD(P)H-quinone oxidoreductase subunit J, chloroplastic.